A 374-amino-acid polypeptide reads, in one-letter code: Carbamoyl phosphate synthase small chain (374 aa).

Residues 1–186 (MTEPAILVLE…DRNEWKRAAP (186 aa)) form a CPSase region. Residues Ser-47, Gly-237, and Gly-239 each coordinate L-glutamine. The Glutamine amidotransferase type-1 domain maps to 189–374 (KVVAYDYGVK…RFITMMAAQS (186 aa)). The active-site Nucleophile is the Cys-265. Positions 266, 269, 307, 309, and 310 each coordinate L-glutamine. Residues His-349 and Glu-351 contribute to the active site.

It belongs to the CarA family. As to quaternary structure, composed of two chains; the small (or glutamine) chain promotes the hydrolysis of glutamine to ammonia, which is used by the large (or ammonia) chain to synthesize carbamoyl phosphate. Tetramer of heterodimers (alpha,beta)4.

The enzyme catalyses hydrogencarbonate + L-glutamine + 2 ATP + H2O = carbamoyl phosphate + L-glutamate + 2 ADP + phosphate + 2 H(+). The catalysed reaction is L-glutamine + H2O = L-glutamate + NH4(+). The protein operates within amino-acid biosynthesis; L-arginine biosynthesis; carbamoyl phosphate from bicarbonate: step 1/1. Its pathway is pyrimidine metabolism; UMP biosynthesis via de novo pathway; (S)-dihydroorotate from bicarbonate: step 1/3. Its function is as follows. Small subunit of the glutamine-dependent carbamoyl phosphate synthetase (CPSase). CPSase catalyzes the formation of carbamoyl phosphate from the ammonia moiety of glutamine, carbonate, and phosphate donated by ATP, constituting the first step of 2 biosynthetic pathways, one leading to arginine and/or urea and the other to pyrimidine nucleotides. The small subunit (glutamine amidotransferase) binds and cleaves glutamine to supply the large subunit with the substrate ammonia. The sequence is that of Carbamoyl phosphate synthase small chain from Xylella fastidiosa (strain 9a5c).